The chain runs to 1183 residues: Phospholipid-transporting ATPase FetA (1183 aa).

Helical transmembrane passes span 96–116, 299–319, and 348–368; these read ISSLAWYTTVIPLIVVLSITG, VLVVWIFMFLGGMCFLLSIGH, and ALIFWSYFIVLNTMVPISLYV. The active-site 4-aspartylphosphate intermediate is the aspartate 416. ATP contacts are provided by aspartate 416, lysine 417, threonine 418, glutamate 519, phenylalanine 560, lysine 583, arginine 617, threonine 697, glycine 698, aspartate 699, arginine 812, and lysine 818. Aspartate 416 serves as a coordination point for Mg(2+). Threonine 418 provides a ligand contact to Mg(2+). Mg(2+) is bound at residue aspartate 838. ATP is bound by residues asparagine 841 and aspartate 842. A Mg(2+)-binding site is contributed by aspartate 842. Helical transmembrane passes span 904 to 924, 927 to 947, 981 to 1001, 1014 to 1034, 1049 to 1069, and 1090 to 1110; these read FAFTLVHFWYAFFNGFSAQTV, IWFITFYNLIYTSLPVLGLSL, CLLHGIYNSFVLFFVPMGTVF, FQSFSLLVQTTLIGVMTMQIA, WGSLGLYFCILILLCSDGLCL, and IWLCLILSTILCMIPLIGYNF.

The protein belongs to the cation transport ATPase (P-type) (TC 3.A.3) family. Type IV subfamily. Mg(2+) serves as cofactor. Highly expressed in testis.

The protein localises to the cytoplasmic vesicle. It is found in the secretory vesicle. The protein resides in the acrosome membrane. It catalyses the reaction ATP + H2O + phospholipidSide 1 = ADP + phosphate + phospholipidSide 2.. P4-ATPase flippase which catalyzes the hydrolysis of ATP coupled to the transport of aminophospholipids from the outer to the inner leaflet of various membranes and ensures the maintenance of asymmetric distribution of phospholipids. Phospholipid translocation also seems to be implicated in vesicle formation and in uptake of lipid signaling molecules. May play a role in phospholid transport across membranes and in acrosome formation. The protein is Phospholipid-transporting ATPase FetA (Atp8b5) of Mus musculus (Mouse).